The primary structure comprises 955 residues: RNA polymerase-associated protein RapA (955 aa).

The 171-residue stretch at 163-333 (EVGHRYAPRV…FARLRLLDPE (171 aa)) folds into the Helicase ATP-binding domain. An ATP-binding site is contributed by 176 to 183 (DEVGLGKT). The DEAH box signature appears at 279-282 (DEAH). The Helicase C-terminal domain maps to 478 to 642 (RVEWLLELLL…AVRDELFELL (165 aa)).

This sequence belongs to the SNF2/RAD54 helicase family. RapA subfamily. As to quaternary structure, interacts with the RNAP. Has a higher affinity for the core RNAP than for the holoenzyme. Its ATPase activity is stimulated by binding to RNAP.

Functionally, transcription regulator that activates transcription by stimulating RNA polymerase (RNAP) recycling in case of stress conditions such as supercoiled DNA or high salt concentrations. Probably acts by releasing the RNAP, when it is trapped or immobilized on tightly supercoiled DNA. Does not activate transcription on linear DNA. Probably not involved in DNA repair. The protein is RNA polymerase-associated protein RapA of Aeromonas hydrophila subsp. hydrophila (strain ATCC 7966 / DSM 30187 / BCRC 13018 / CCUG 14551 / JCM 1027 / KCTC 2358 / NCIMB 9240 / NCTC 8049).